Here is a 236-residue protein sequence, read N- to C-terminus: tRNA (guanine-N(7)-)-methyltransferase (236 aa).

Residues E68, E93, D120, and D143 each contribute to the S-adenosyl-L-methionine site. D143 is a catalytic residue. Residues K147, D179, and 212–215 (TKFE) contribute to the substrate site.

The protein belongs to the class I-like SAM-binding methyltransferase superfamily. TrmB family.

It carries out the reaction guanosine(46) in tRNA + S-adenosyl-L-methionine = N(7)-methylguanosine(46) in tRNA + S-adenosyl-L-homocysteine. It participates in tRNA modification; N(7)-methylguanine-tRNA biosynthesis. In terms of biological role, catalyzes the formation of N(7)-methylguanine at position 46 (m7G46) in tRNA. The chain is tRNA (guanine-N(7)-)-methyltransferase from Nitrosococcus oceani (strain ATCC 19707 / BCRC 17464 / JCM 30415 / NCIMB 11848 / C-107).